A 402-amino-acid polypeptide reads, in one-letter code: Flavohemoprotein (402 aa).

Residues 1–136 (MLSEKTIEIV…IADAFISIEA (136 aa)) enclose the Globin domain. H85 contributes to the heme b binding site. Catalysis depends on charge relay system residues Y95 and E135. Positions 147-402 (GGWKDFRNFV…EFFGPAASLQ (256 aa)) are reductase. One can recognise an FAD-binding FR-type domain in the interval 150 to 260 (KDFRNFVVVK…SAPAGDFVLN (111 aa)). Residues Y188 and 204–207 (RQYS) contribute to the FAD site. 273–278 (GVGITP) is an NADP(+) binding site. An FAD-binding site is contributed by 394–397 (FFGP).

Belongs to the globin family. Two-domain flavohemoproteins subfamily. It in the C-terminal section; belongs to the flavoprotein pyridine nucleotide cytochrome reductase family. Heme b serves as cofactor. Requires FAD as cofactor.

It catalyses the reaction 2 nitric oxide + NADPH + 2 O2 = 2 nitrate + NADP(+) + H(+). The enzyme catalyses 2 nitric oxide + NADH + 2 O2 = 2 nitrate + NAD(+) + H(+). In terms of biological role, is involved in NO detoxification in an aerobic process, termed nitric oxide dioxygenase (NOD) reaction that utilizes O(2) and NAD(P)H to convert NO to nitrate, which protects the bacterium from various noxious nitrogen compounds. Therefore, plays a central role in the inducible response to nitrosative stress. In Bacillus anthracis, this protein is Flavohemoprotein.